The primary structure comprises 322 residues: MIKAGIIGGAGYTAGELIRLLINHPDVDIKFINSSSNAGNKITDVHEGLYGETDLVFTDELPLDEIDVLFFCTAHGDTKKFMDSHNVPEDLKIIDLSMDYRIKSDDHDFIYGLPELNRRAICHSKHVANPGCFATCIQLGLLPLAKHLLLNEDIMVNAITGSTGAGVKPGATSHFSWRNNNMSIYKPFSHQHVPEIKQSLKQLQNSFNAEIDFIPYRGDFPRGIFATLVVKCKVELEELVKMYQDYYAEDSFVHIVDKNIDLKQVVNTNKCLIHLEKHGDKLLVISCIDNLLKGASGQAVHNMNLMFNLEETVGLRLKPSAF.

Residue cysteine 132 is part of the active site.

Belongs to the NAGSA dehydrogenase family. Type 1 subfamily.

It is found in the cytoplasm. The catalysed reaction is N-acetyl-L-glutamate 5-semialdehyde + phosphate + NADP(+) = N-acetyl-L-glutamyl 5-phosphate + NADPH + H(+). It participates in amino-acid biosynthesis; L-arginine biosynthesis; N(2)-acetyl-L-ornithine from L-glutamate: step 3/4. Functionally, catalyzes the NADPH-dependent reduction of N-acetyl-5-glutamyl phosphate to yield N-acetyl-L-glutamate 5-semialdehyde. The polypeptide is N-acetyl-gamma-glutamyl-phosphate reductase (Phocaeicola vulgatus (strain ATCC 8482 / DSM 1447 / JCM 5826 / CCUG 4940 / NBRC 14291 / NCTC 11154) (Bacteroides vulgatus)).